The sequence spans 408 residues: Snake venom metalloproteinase BaP1 (408 aa).

The N-terminal stretch at 1–20 is a signal peptide; it reads MIEVLLVTICLAVFPYQGSS. Residues 21–191 constitute a propeptide that is removed on maturation; that stretch reads IILESGNVND…KASQSNLTPE (171 aa). Gln192 carries the post-translational modification Pyrrolidone carboxylic acid. Positions 198 to 394 constitute a Peptidase M12B domain; it reads RYIELAVVAD…HNPQCILNKP (197 aa). 3 cysteine pairs are disulfide-bonded: Cys309-Cys389, Cys349-Cys373, and Cys351-Cys356. His334 serves as a coordination point for Zn(2+). Residue Glu335 is part of the active site. His338 and His344 together coordinate Zn(2+). The propeptide occupies 395–408; that stretch reads LLTVSGNELLEAGE.

It belongs to the venom metalloproteinase (M12B) family. P-I subfamily. Monomer. It depends on Zn(2+) as a cofactor. As to expression, expressed by the venom gland.

It localises to the secreted. Inhibited by EDTA, partially inhibited by o-phenantropine, and not inhibited by PMSF, pepstatin A, and aprotinin. In terms of biological role, zinc metalloprotease that exhibits a weak hemorrhagic activity (with a minimum hemorrhagic dose of 20 ug by intradermal and intramuscular injection into mice). The basal membrane components collagen (all chains of type IV) (COL4A4), laminin and nidogen are all degraded by this toxin. Rapidly degrades the Aalpha-chain (FGA) of fibrinogen, and later on, degrades the Bbeta-chain (FGB) of fibrinogen. Also activates the complement system, and induces rat neutrophil chemotaxis. Induces edema in mouse food pad and shows a mild myotoxicity. The chain is Snake venom metalloproteinase BaP1 from Bothrops asper (Terciopelo).